Consider the following 347-residue polypeptide: Ketol-acid reductoisomerase (NADP(+)) (347 aa).

Residues 1–185 (MKIYYDEDAN…GGTRAGVLET (185 aa)) enclose the KARI N-terminal Rossmann domain. NADP(+) contacts are provided by residues 24 to 27 (YGSQ), Arg-47, Ser-50, Ser-52, and 82 to 85 (DEFQ). Residue His-107 is part of the active site. Gly-133 contributes to the NADP(+) binding site. Residues 186–336 (SFKEETETDL…AELRSKMKFL (151 aa)) form the KARI C-terminal knotted domain. Residues Asp-194, Glu-198, Glu-230, and Glu-234 each coordinate Mg(2+). Residue Ser-255 participates in substrate binding.

It belongs to the ketol-acid reductoisomerase family. It depends on Mg(2+) as a cofactor.

It carries out the reaction (2R)-2,3-dihydroxy-3-methylbutanoate + NADP(+) = (2S)-2-acetolactate + NADPH + H(+). The enzyme catalyses (2R,3R)-2,3-dihydroxy-3-methylpentanoate + NADP(+) = (S)-2-ethyl-2-hydroxy-3-oxobutanoate + NADPH + H(+). It participates in amino-acid biosynthesis; L-isoleucine biosynthesis; L-isoleucine from 2-oxobutanoate: step 2/4. Its pathway is amino-acid biosynthesis; L-valine biosynthesis; L-valine from pyruvate: step 2/4. In terms of biological role, involved in the biosynthesis of branched-chain amino acids (BCAA). Catalyzes an alkyl-migration followed by a ketol-acid reduction of (S)-2-acetolactate (S2AL) to yield (R)-2,3-dihydroxy-isovalerate. In the isomerase reaction, S2AL is rearranged via a Mg-dependent methyl migration to produce 3-hydroxy-3-methyl-2-ketobutyrate (HMKB). In the reductase reaction, this 2-ketoacid undergoes a metal-dependent reduction by NADPH to yield (R)-2,3-dihydroxy-isovalerate. This is Ketol-acid reductoisomerase (NADP(+)) from Gamma-proteobacterium EBAC31A08.